The primary structure comprises 348 residues: Fe(3+) ions import ATP-binding protein FbpC (348 aa).

One can recognise an ABC transporter domain in the interval 7–237 (VELRNVTKRF…PASRFMASFM (231 aa)). Position 39-46 (39-46 (GPSGCGKT)) interacts with ATP.

Belongs to the ABC transporter superfamily. Fe(3+) ion importer (TC 3.A.1.10) family. The complex is composed of two ATP-binding proteins (FbpC), two transmembrane proteins (FbpB) and a solute-binding protein (FbpA).

Its subcellular location is the cell inner membrane. The catalysed reaction is Fe(3+)(out) + ATP + H2O = Fe(3+)(in) + ADP + phosphate + H(+). In terms of biological role, part of the ABC transporter complex FbpABC involved in Fe(3+) ions import. Responsible for energy coupling to the transport system. This Escherichia coli O157:H7 protein is Fe(3+) ions import ATP-binding protein FbpC.